A 359-amino-acid polypeptide reads, in one-letter code: NF-kappa-B inhibitor beta (359 aa).

A phosphoserine; by RPS6KA1 mark is found at serine 19 and serine 23. ANK repeat units follow at residues 57 to 86 (DGDT…GTEY), 93 to 122 (LGQT…GVLV), and 126 to 155 (GGHT…SHPR). The disordered stretch occupies residues 153–194 (HPRDASDTYLTQSQDCTPDTSHAPAAVDSQPNPENEEEPRDE). A compositionally biased stretch (polar residues) spans 160-172 (TYLTQSQDCTPDT). ANK repeat units lie at residues 206–235 (DGHT…DLNK), 240–269 (CGRT…DPTA), and 273–302 (GGRT…PEPE). The interval 298-359 (APEPEDEDDK…KPLPDDPNPA (62 aa)) is disordered. Serine 313 and serine 318 each carry phosphoserine. The span at 318–331 (SDSDNRDEGDEYDD) shows a compositional bias: acidic residues. Over residues 344-359 (PPSPASKPLPDDPNPA) the composition is skewed to pro residues.

The protein belongs to the NF-kappa-B inhibitor family. Interacts with THRB (via ligand-binding domain). Interacts with RELA and REL. Interacts with COMMD1. Interacts with inhibitor kappa B-interacting Ras-like NKIRAS1 and NKIRAS2. Phosphorylated by RPS6KA1; followed by degradation. Interaction with NKIRAS1 and NKIRAS2 probably prevents phosphorylation. Highly expressed in testis followed by spleen.

Its subcellular location is the cytoplasm. The protein localises to the nucleus. Its function is as follows. Inhibits NF-kappa-B by complexing with and trapping it in the cytoplasm. However, the unphosphorylated form resynthesized after cell stimulation is able to bind NF-kappa-B allowing its transport to the nucleus and protecting it to further NFKBIA-dependent inactivation. Association with inhibitor kappa B-interacting NKIRAS1 and NKIRAS2 prevent its phosphorylation rendering it more resistant to degradation, explaining its slower degradation. The protein is NF-kappa-B inhibitor beta (Nfkbib) of Mus musculus (Mouse).